The chain runs to 406 residues: MARAFLFVLDSFGVGGAPDAAAYGDEGADTLGHIAEFCAAGAADRAGLREGPLSLPNMSELGLMQIARSASGRFPAGMPVPEKVYGIYGAATEISRGKDTPSGHWEIAGTPVSFDWGYFPIEGDAFPQEFIEALCREADVPGILGNCHASGTEIIARLGEEHIRTGKPICYTSSDSVFQVAAHEVHFGLDRLLAFCGLARGLLDSYNIGRVIARPFIGQSASTFQRTGNRRDFSVLPPEPTLLDRLIEQGRHVHAVGKIGDIFAHQGISRVIKANGNEALMDASLSAIDAAEDGDLVFTNFVDFDMIYGHRRDVPGYAAALEAFDARLPDVHKKLKPGDLVVLTADHGCDPTWRGTDHTRERVPVIAYGPGIRSRSIGVRRGYADIGESIARHLGIPAGPHGRSFL.

6 residues coordinate Mn(2+): Asp-10, Asp-305, His-310, Asp-346, His-347, and His-358.

This sequence belongs to the phosphopentomutase family. Mn(2+) serves as cofactor.

The protein localises to the cytoplasm. It carries out the reaction 2-deoxy-alpha-D-ribose 1-phosphate = 2-deoxy-D-ribose 5-phosphate. The catalysed reaction is alpha-D-ribose 1-phosphate = D-ribose 5-phosphate. It functions in the pathway carbohydrate degradation; 2-deoxy-D-ribose 1-phosphate degradation; D-glyceraldehyde 3-phosphate and acetaldehyde from 2-deoxy-alpha-D-ribose 1-phosphate: step 1/2. Isomerase that catalyzes the conversion of deoxy-ribose 1-phosphate (dRib-1-P) and ribose 1-phosphate (Rib-1-P) to deoxy-ribose 5-phosphate (dRib-5-P) and ribose 5-phosphate (Rib-5-P), respectively. The polypeptide is Phosphopentomutase (Rhizobium johnstonii (strain DSM 114642 / LMG 32736 / 3841) (Rhizobium leguminosarum bv. viciae)).